The primary structure comprises 98 residues: PqqA binding protein (98 aa).

Belongs to the PqqD family. As to quaternary structure, monomer. Interacts with PqqE.

The protein operates within cofactor biosynthesis; pyrroloquinoline quinone biosynthesis. Functions as a PqqA binding protein and presents PqqA to PqqE, in the pyrroloquinoline quinone (PQQ) biosynthetic pathway. The protein is PqqA binding protein of Pseudomonas syringae pv. tomato (strain ATCC BAA-871 / DC3000).